The chain runs to 1342 residues: MVYSYTEKKRIRKDFGKRPQVLDIPYLLSIQLDSFQKFIEQDPEGQYGLEAAFRSVFPIKSYSGNSELQYVSYRLGEPVFDVKECQIRGVTFSAPLRVKLRLVIYEREAPEGTVKDIKEQEVYMGEIPLMTDNGTFVINGTERVIVSQLHRSPGVFFDSDKGKTHSSGKVLYNARIIPYRGSWLDFEFDPKDNLFVRIDRRRKLPATIILRALGYSTEQILDLFFDKIVYEINGNKLQMDLVPERLRGETASFDIEANGKVYIEKGRRITARHIRQLEKDGIERIEVPVEYIAGKVLSKDYIDESTGELIGAANMELSLDLLAKLSQSGHKRIETLFTNDLDHGAYMSETVRVDPSNDRLSALVEIYRMMRPGEPPTREAAETLFENLFFSEDRYDLSAVGRMKFNRSLLRDEIEGSGILSKDDIIEVMKKLIDIRNGKGEVDDIDHLGNRRIRSVGEMAENQFRVGLVRVERAVKERLSLGDLDTLMPQDMINAKPISAAVKEFFGSSQLSQFMDQNNPLSEITHKRRISALGPGGLTRERAGFEVRDVHPTHYGRVCPIETPEGPNIGLINSLSVYAQTNEYGFLETPYRRVRDNVVTDEIHYLSAIEEGNFVIAQANTNLDEEGRFIDELVTCRNKGESSLFSRDQVEYMDVSTQQVVSVGASLIPFLEHDDANRALMGANMQRQAVPTLRADKPLVGTGMERAVAVDSGVTAVAKRGGTVQYVDASRIVIRVNDDEMYPGEAGIDIYNLTKYTRSNQNTCISQMPCVSLGEPVERGDVLADGPSTDLGELALGQNMRVAFMPWNGYNFEDSILVSERVVQEDRFTTIHIQELACVSRDTKLGPEEITADIPNVGEAALSKLDESGIVYIGAEVTGGDILVGKVTPKGETQLTPEEKLLRAIFGEKASDVKDSSLRVPNGVSGTIIDVQVFTRDGVEKDKRALEIEEMQLKQAKKDLTEELQILEAGLFARIHAVLVSGGVEADKLDKLPRERWLELGLTDEDKQNQLEQLAEQYDELKHEFEKKLEAKRRKITQGDDLAPGVLKIVKVYLAVKRQIQPGDKMAGRHGNKGVISKINPIEDMPYDENGTPVDIVLNPLGVPSRMNIGQILETHLGMAAKGIGEKINAMLKQHEEVTKLREFIQRAYDLGDDVRQKVDLSTFSDEEVMRLAENLKKGMPIATPVFDGAKEKEIKELLQMGGIPTSGQITLYDGRTGEKFERQVTVGYMYMLKLNHLVDDKMHARSTGSYSLVTQQPLGGKAQFGGQRFGEMEVWALEAYGAAYTLQEMLTVKSDDVNGRTKMYKNIVDGNHQMEPGMPESFNVLLKEIRSLGINIELEEE.

It belongs to the RNA polymerase beta chain family. In terms of assembly, the RNAP catalytic core consists of 2 alpha, 1 beta, 1 beta' and 1 omega subunit. When a sigma factor is associated with the core the holoenzyme is formed, which can initiate transcription.

The catalysed reaction is RNA(n) + a ribonucleoside 5'-triphosphate = RNA(n+1) + diphosphate. In terms of biological role, DNA-dependent RNA polymerase catalyzes the transcription of DNA into RNA using the four ribonucleoside triphosphates as substrates. The protein is DNA-directed RNA polymerase subunit beta of Pectobacterium carotovorum subsp. carotovorum (strain PC1).